The following is a 352-amino-acid chain: 4-hydroxy-3-methylbut-2-en-1-yl diphosphate synthase (flavodoxin) (352 aa).

Residues Cys262, Cys265, Cys297, and Glu304 each coordinate [4Fe-4S] cluster.

It belongs to the IspG family. [4Fe-4S] cluster is required as a cofactor.

It carries out the reaction (2E)-4-hydroxy-3-methylbut-2-enyl diphosphate + oxidized [flavodoxin] + H2O + 2 H(+) = 2-C-methyl-D-erythritol 2,4-cyclic diphosphate + reduced [flavodoxin]. Its pathway is isoprenoid biosynthesis; isopentenyl diphosphate biosynthesis via DXP pathway; isopentenyl diphosphate from 1-deoxy-D-xylulose 5-phosphate: step 5/6. Functionally, converts 2C-methyl-D-erythritol 2,4-cyclodiphosphate (ME-2,4cPP) into 1-hydroxy-2-methyl-2-(E)-butenyl 4-diphosphate. The sequence is that of 4-hydroxy-3-methylbut-2-en-1-yl diphosphate synthase (flavodoxin) from Campylobacter curvus (strain 525.92).